Here is a 469-residue protein sequence, read N- to C-terminus: MSNDSNLLATDIEEYLRVHENKDLMRFITCGSVDDGKSTLIGRLLFDSKMIFEDHMAAIEKDSKKFNTTDNDFDLSLLVDGLQSEREQGITIDVAYRYFATEQRKFIIADTPGHEQYTRNMVTGASTCDLAIILIDARYGVQVQTRRHSYICSLLGIKHLVVAVNKMDAVDYDQAVYKKIKADYREFAKQLNIADIRFVPISALKGDNVVNESENMTWYPGSPLLRLLNTIQIDTDINDKFRLAVQYVNRPNLDFRGFCGTVASGEIRVGDTIQALPSGKQSKVKSIVTFDGELESAFAGMAITLTLEDEIDISRGNMIVRPHEKPTSSKNFVADLVWMTEEALHVDREYIIKAGAHSTFGSVISINNKVDVNTMEKCEANQLVLNEIGSCNFEVAEALHFDRYSENRATGAFIMIDRLTNATVGAGMISGSVEALAKTAPEYSAFEVEFNALVRKHYPHWETKDITKL.

The tr-type G domain maps to 22–224; it reads KDLMRFITCG…NMTWYPGSPL (203 aa). Residues 31 to 38 are G1; that stretch reads GSVDDGKS. Position 31 to 38 (31 to 38) interacts with GTP; it reads GSVDDGKS. The G2 stretch occupies residues 89–93; sequence GITID. The segment at 110–113 is G3; sequence DTPG. Residues 110–114 and 165–168 contribute to the GTP site; these read DTPGH and NKMD. The tract at residues 165-168 is G4; that stretch reads NKMD. Residues 202-204 are G5; that stretch reads SAL.

The protein belongs to the TRAFAC class translation factor GTPase superfamily. Classic translation factor GTPase family. CysN/NodQ subfamily. In terms of assembly, heterodimer composed of CysD, the smaller subunit, and CysN.

The catalysed reaction is sulfate + ATP + H(+) = adenosine 5'-phosphosulfate + diphosphate. It functions in the pathway sulfur metabolism; hydrogen sulfide biosynthesis; sulfite from sulfate: step 1/3. With CysD forms the ATP sulfurylase (ATPS) that catalyzes the adenylation of sulfate producing adenosine 5'-phosphosulfate (APS) and diphosphate, the first enzymatic step in sulfur assimilation pathway. APS synthesis involves the formation of a high-energy phosphoric-sulfuric acid anhydride bond driven by GTP hydrolysis by CysN coupled to ATP hydrolysis by CysD. In Psychromonas ingrahamii (strain DSM 17664 / CCUG 51855 / 37), this protein is Sulfate adenylyltransferase subunit 1.